The following is a 365-amino-acid chain: Phosphoserine aminotransferase (365 aa).

R42 lines the L-glutamate pocket. Pyridoxal 5'-phosphate contacts are provided by residues 76 to 77, W102, T156, D175, and Q198; that span reads GR. The residue at position 199 (K199) is an N6-(pyridoxal phosphate)lysine. 240–241 contacts pyridoxal 5'-phosphate; the sequence is NT.

The protein belongs to the class-V pyridoxal-phosphate-dependent aminotransferase family. SerC subfamily. In terms of assembly, homodimer. Requires pyridoxal 5'-phosphate as cofactor.

It localises to the cytoplasm. It carries out the reaction O-phospho-L-serine + 2-oxoglutarate = 3-phosphooxypyruvate + L-glutamate. The enzyme catalyses 4-(phosphooxy)-L-threonine + 2-oxoglutarate = (R)-3-hydroxy-2-oxo-4-phosphooxybutanoate + L-glutamate. It functions in the pathway amino-acid biosynthesis; L-serine biosynthesis; L-serine from 3-phospho-D-glycerate: step 2/3. It participates in cofactor biosynthesis; pyridoxine 5'-phosphate biosynthesis; pyridoxine 5'-phosphate from D-erythrose 4-phosphate: step 3/5. Catalyzes the reversible conversion of 3-phosphohydroxypyruvate to phosphoserine and of 3-hydroxy-2-oxo-4-phosphonooxybutanoate to phosphohydroxythreonine. In Shewanella oneidensis (strain ATCC 700550 / JCM 31522 / CIP 106686 / LMG 19005 / NCIMB 14063 / MR-1), this protein is Phosphoserine aminotransferase.